The following is a 1320-amino-acid chain: CAP-Gly domain-containing linker protein 1 (1320 aa).

A disordered region spans residues 1–53 (MSMLKPSGLKAPTKILKPGSTALKTPAAAAAPLEKTVPSEKASGPPSSETQEE). Residues 21–35 (TALKTPAAAAAPLEK) show a composition bias toward low complexity. Phosphoserine is present on Ser-48. Thr-50 bears the Phosphothreonine mark. A CAP-Gly 1 domain is found at 78–120 (GETQFAPGQWAGIVLDEPIGKNDGSVAGVRYFQCEPLKGIFTR). An important for tubulin binding region spans residues 97 to 101 (GKNDG). Ser-146 carries the phosphoserine modification. A compositionally biased stretch (polar residues) spans 156 to 171 (VSSSPATPSNIPQKPS). The interval 156-181 (VSSSPATPSNIPQKPSQPVAKETSAT) is disordered. Position 181 is a phosphothreonine (Thr-181). A phosphoserine mark is found at Ser-194, Ser-196, Ser-199, and Ser-203. The CAP-Gly 2 domain maps to 231 to 273 (GETDFAKGEWCGVELDEPLGKNDGAVAGTRYFQCQPKYGLFAP). The segment covering 301-331 (TTPASLKRSPSASSLSSMSSVASSVSSKPSR) has biased composition (low complexity). The tract at residues 301–338 (TTPASLKRSPSASSLSSMSSVASSVSSKPSRTGLLTET) is disordered. Ser-309 bears the Phosphoserine mark. Ser-311 bears the Phosphoserine; by PKA mark. Ser-314 and Ser-347 each carry phosphoserine. Residues 1089 to 1109 (SLPSNTLRESEYRKDADEEKA) are disordered. Positions 1096-1109 (RESEYRKDADEEKA) are enriched in basic and acidic residues. Ser-1116 bears the Phosphoserine mark. A disordered region spans residues 1178 to 1201 (KRQLSSSSGNTDVQTEEDERAQES). Positions 1180-1190 (QLSSSSGNTDV) are enriched in polar residues. The residue at position 1246 (Ser-1246) is a Phosphoserine. The segment at 1299–1316 (PYCEICEMFGHWATNCND) adopts a CCHC-type zinc-finger fold.

In terms of assembly, interacts with MTOR; phosphorylates and regulates CLIP1. Interacts (via CAP-Gly domains) with tubulin and TUBA1B. Interacts with SLAIN2. Interacts with MAPRE1 and MAPRE3. Interacts (via zinc finger) with DCTN1. Binds preferentially to tyrosinated microtubules, and only marginally to detyrosinated microtubules. Phosphorylated. Phosphorylation induces conformational changes by increasing the affinity of the N-terminus for C-terminus, resulting in inhibition of its function thus decreasing its binding to microtubules and DCTN1. Exhibits a folded, autoinhibited conformation when phosphorylated and an open conformation when dephosphorylated with increased binding affinity to microtubules and DCTN1. Phosphorylation regulates its recruitment to tyrosinated microtubules and the recruitment of vesicular cargo to microtubules in neurons. Phosphorylation by MTOR may positively regulate CLIP1 association with microtubules.

The protein localises to the cytoplasm. The protein resides in the cytoskeleton. Its subcellular location is the cytoplasmic vesicle membrane. It localises to the cell projection. It is found in the ruffle. Binds to the plus end of microtubules and regulates the dynamics of the microtubule cytoskeleton. Promotes microtubule growth and microtubule bundling. Links cytoplasmic vesicles to microtubules and thereby plays an important role in intracellular vesicle trafficking. Plays a role macropinocytosis and endosome trafficking. In Rattus norvegicus (Rat), this protein is CAP-Gly domain-containing linker protein 1 (Clip1).